Reading from the N-terminus, the 734-residue chain is Ribosomal RNA large subunit methyltransferase K/L (734 aa).

In terms of domain architecture, THUMP spans His49 to Leu167.

The protein belongs to the methyltransferase superfamily. RlmKL family.

The protein localises to the cytoplasm. The catalysed reaction is guanosine(2445) in 23S rRNA + S-adenosyl-L-methionine = N(2)-methylguanosine(2445) in 23S rRNA + S-adenosyl-L-homocysteine + H(+). The enzyme catalyses guanosine(2069) in 23S rRNA + S-adenosyl-L-methionine = N(2)-methylguanosine(2069) in 23S rRNA + S-adenosyl-L-homocysteine + H(+). Specifically methylates the guanine in position 2445 (m2G2445) and the guanine in position 2069 (m7G2069) of 23S rRNA. The polypeptide is Ribosomal RNA large subunit methyltransferase K/L (Acinetobacter baumannii (strain ACICU)).